The sequence spans 188 residues: MASFSTNEFRSGMKIMLDNEPCVIIENEFVKPGKGQAFSRVKIRKLLSGKVLEKTFKSGESVEAADVVEVELDYLYNDGEFYHFMDNVSFEQIAADVKAVGDNAKWLVENNTCTLTLWNGNPIIVTPPNFVELEVTETDPGLKGDTQGTGGKPATLITGAVVRVPLFIQIGEVIKADTRSGEYVSRVK.

Lys-34 bears the N6-(3,6-diaminohexanoyl)-5-hydroxylysine mark.

It belongs to the elongation factor P family. In terms of processing, may be beta-lysylated on the epsilon-amino group of Lys-34 by the combined action of EpmA and EpmB, and then hydroxylated on the C5 position of the same residue by EpmC (if this protein is present). Lysylation is critical for the stimulatory effect of EF-P on peptide-bond formation. The lysylation moiety may extend toward the peptidyltransferase center and stabilize the terminal 3-CCA end of the tRNA. Hydroxylation of the C5 position on Lys-34 may allow additional potential stabilizing hydrogen-bond interactions with the P-tRNA.

It localises to the cytoplasm. Its pathway is protein biosynthesis; polypeptide chain elongation. Its function is as follows. Involved in peptide bond synthesis. Alleviates ribosome stalling that occurs when 3 or more consecutive Pro residues or the sequence PPG is present in a protein, possibly by augmenting the peptidyl transferase activity of the ribosome. Modification of Lys-34 is required for alleviation. The chain is Elongation factor P from Photobacterium profundum (strain SS9).